The sequence spans 120 residues: MSRLTLPKNARLLKRKQFVYVQRNGRCCRADQVTLRVVPSRHSNTRKVGITVSKKFGKAHQRNRFKRIVREAFRHVRPNLPGCQAVISPRGNSQPDFLKLSEELLQRIPEALPLASSSRC.

The protein belongs to the RnpA family. As to quaternary structure, consists of a catalytic RNA component (M1 or rnpB) and a protein subunit.

It carries out the reaction Endonucleolytic cleavage of RNA, removing 5'-extranucleotides from tRNA precursor.. In terms of biological role, RNaseP catalyzes the removal of the 5'-leader sequence from pre-tRNA to produce the mature 5'-terminus. It can also cleave other RNA substrates such as 4.5S RNA. The protein component plays an auxiliary but essential role in vivo by binding to the 5'-leader sequence and broadening the substrate specificity of the ribozyme. The protein is Ribonuclease P protein component of Chlamydia trachomatis serovar A (strain ATCC VR-571B / DSM 19440 / HAR-13).